The primary structure comprises 89 residues: Small ribosomal subunit protein uS15 (89 aa).

It belongs to the universal ribosomal protein uS15 family. As to quaternary structure, part of the 30S ribosomal subunit. Forms a bridge to the 50S subunit in the 70S ribosome, contacting the 23S rRNA.

One of the primary rRNA binding proteins, it binds directly to 16S rRNA where it helps nucleate assembly of the platform of the 30S subunit by binding and bridging several RNA helices of the 16S rRNA. Functionally, forms an intersubunit bridge (bridge B4) with the 23S rRNA of the 50S subunit in the ribosome. The polypeptide is Small ribosomal subunit protein uS15 (Shewanella frigidimarina (strain NCIMB 400)).